The following is a 132-amino-acid chain: MPNNYRIAKVSSLLKKEITLILQNDLENDLLRSNFISISKIEVTGDLQFCKIYISSAAEGNIRKEIIENLNLAKNYIKHILGQRIEMRRVPELTFKDDTALAKGLSVLKLLEELNNKTHNQNSQVEENNDNV.

This sequence belongs to the RbfA family. As to quaternary structure, monomer. Binds 30S ribosomal subunits, but not 50S ribosomal subunits or 70S ribosomes.

Its subcellular location is the cytoplasm. Its function is as follows. One of several proteins that assist in the late maturation steps of the functional core of the 30S ribosomal subunit. Associates with free 30S ribosomal subunits (but not with 30S subunits that are part of 70S ribosomes or polysomes). Required for efficient processing of 16S rRNA. May interact with the 5'-terminal helix region of 16S rRNA. The sequence is that of Ribosome-binding factor A from Prochlorococcus marinus (strain MIT 9515).